The chain runs to 977 residues: uncharacterized protein (977 aa).

The signal sequence occupies residues 1 to 24 (MQSNLLKVLGVLAIVATLVCFIFA). The interval 125–146 (TESTRPGKSNLDDKGNMIPIPR) is disordered. The next 6 membrane-spanning stretches (helical) occupy residues 612-632 (IKAI…LGFA), 722-742 (LGLS…IVII), 754-774 (AFMA…FLLF), 796-816 (VVMM…LDFV), 833-853 (FIGT…INWF), and 866-886 (GVNM…YGYV). Residues 918-977 (KALSPIGMDDKTRQGITGRAEARLKQRNKTLDQAEKNRKNTPKEGGEKTNAEPPQPEARG) are disordered. The span at 937–967 (AEARLKQRNKTLDQAEKNRKNTPKEGGEKTN) shows a compositional bias: basic and acidic residues.

Belongs to the TrbL/VirB6 family.

Its subcellular location is the cell membrane. This is an uncharacterized protein from Rickettsia felis (strain ATCC VR-1525 / URRWXCal2) (Rickettsia azadi).